Reading from the N-terminus, the 190-residue chain is Hypoxanthine/guanine phosphoribosyltransferase (190 aa).

This sequence belongs to the purine/pyrimidine phosphoribosyltransferase family. Archaeal HPRT subfamily. In terms of assembly, homodimer.

Its subcellular location is the cytoplasm. It carries out the reaction IMP + diphosphate = hypoxanthine + 5-phospho-alpha-D-ribose 1-diphosphate. The enzyme catalyses GMP + diphosphate = guanine + 5-phospho-alpha-D-ribose 1-diphosphate. It participates in purine metabolism; IMP biosynthesis via salvage pathway; IMP from hypoxanthine: step 1/1. Its function is as follows. Catalyzes a salvage reaction resulting in the formation of IMP that is energically less costly than de novo synthesis. The protein is Hypoxanthine/guanine phosphoribosyltransferase of Methanosalsum zhilinae (strain DSM 4017 / NBRC 107636 / OCM 62 / WeN5) (Methanohalophilus zhilinae).